The chain runs to 244 residues: Large ribosomal subunit protein uL30 (244 aa).

Belongs to the universal ribosomal protein uL30 family.

This is Large ribosomal subunit protein uL30 (RPL7) from Candida glabrata (strain ATCC 2001 / BCRC 20586 / JCM 3761 / NBRC 0622 / NRRL Y-65 / CBS 138) (Yeast).